Reading from the N-terminus, the 299-residue chain is tRNA dimethylallyltransferase (299 aa).

5-12 is an ATP binding site; sequence GPTASGKT. Residue 7–12 participates in substrate binding; the sequence is TASGKT. Interaction with substrate tRNA regions lie at residues 30-33, 154-158, and 235-240; these read DSAL, QRLSR, and RCVGYR.

It belongs to the IPP transferase family. Monomer. Mg(2+) serves as cofactor.

The enzyme catalyses adenosine(37) in tRNA + dimethylallyl diphosphate = N(6)-dimethylallyladenosine(37) in tRNA + diphosphate. Catalyzes the transfer of a dimethylallyl group onto the adenine at position 37 in tRNAs that read codons beginning with uridine, leading to the formation of N6-(dimethylallyl)adenosine (i(6)A). The protein is tRNA dimethylallyltransferase of Shewanella denitrificans (strain OS217 / ATCC BAA-1090 / DSM 15013).